Here is a 177-residue protein sequence, read N- to C-terminus: MFDFAWSEIAVIGVVALVVIGPKDIPGAVRGVARMVRKARSMAAEFQGQMDQMMKEADLGDVRETFNDLRGVNLRQQLSRTLDPDGSMRSTFDNNPMAPSPAPMIMGGDEAHMVEERPFHSLSVMDESHMASEWTREKTVSSETARRAATAPAFIPPGEAFRSARRAPAFIPPADQG.

The chain crosses the membrane as a helical span at residues 1–21 (MFDFAWSEIAVIGVVALVVIG). Residues 136 to 146 (REKTVSSETAR) show a composition bias toward basic and acidic residues. Residues 136–177 (REKTVSSETARRAATAPAFIPPGEAFRSARRAPAFIPPADQG) are disordered.

It belongs to the TatB family. As to quaternary structure, the Tat system comprises two distinct complexes: a TatABC complex, containing multiple copies of TatA, TatB and TatC subunits, and a separate TatA complex, containing only TatA subunits. Substrates initially bind to the TatABC complex, which probably triggers association of the separate TatA complex to form the active translocon.

The protein resides in the cell inner membrane. Its function is as follows. Part of the twin-arginine translocation (Tat) system that transports large folded proteins containing a characteristic twin-arginine motif in their signal peptide across membranes. Together with TatC, TatB is part of a receptor directly interacting with Tat signal peptides. TatB may form an oligomeric binding site that transiently accommodates folded Tat precursor proteins before their translocation. The protein is Sec-independent protein translocase protein TatB of Granulibacter bethesdensis (strain ATCC BAA-1260 / CGDNIH1).